Consider the following 755-residue polypeptide: Cartilage oligomeric matrix protein (755 aa).

The signal sequence occupies residues 1 to 19 (MSPTACVLVLALAALRATG). The segment at 21–84 (GQIPLGGDLA…PARTPGLSVR (64 aa)) is COMP N-terminal. Residues 85–124 (PVALCAPGSCFPGVVCTETATGARCGPCPPGYTGNGSHCT) enclose the EGF-like 1 domain. 21 disulfide bridges follow: cysteine 89-cysteine 100, cysteine 94-cysteine 109, cysteine 112-cysteine 123, cysteine 129-cysteine 140, cysteine 134-cysteine 149, cysteine 152-cysteine 176, cysteine 182-cysteine 195, cysteine 189-cysteine 204, cysteine 207-cysteine 219, cysteine 227-cysteine 241, cysteine 235-cysteine 251, cysteine 253-cysteine 264, cysteine 280-cysteine 285, cysteine 290-cysteine 310, cysteine 326-cysteine 346, cysteine 349-cysteine 369, cysteine 385-cysteine 405, cysteine 408-cysteine 428, cysteine 446-cysteine 466, cysteine 482-cysteine 502, and cysteine 518-cysteine 739. A glycan (N-linked (GlcNAc...) asparagine) is linked at asparagine 119. Residues 125–177 (DVNECNAHPCFPRVRCINTSPGFHCEACPPGFSGPTHEGVGLTFAKTNKQVCT) form the EGF-like 2; calcium-binding domain. The 43-residue stretch at 178-220 (DINECETGQHNCVPNSVCVNTRGSFQCGPCQPGFVGDQRSGCQ) folds into the EGF-like 3; calcium-binding domain. Residues 223–265 (GQHFCPDGSPSPCHEKADCILERDGSRSCVCAVGWAGNGLLCG) form the EGF-like 4 domain. TSP type-3 repeat units lie at residues 266–298 (RDTD…NSGQ), 299–334 (EDVD…NPDQ), 335–357 (RNSD…NDDQ), 358–393 (KDTD…NFDQ), 394–416 (SDSD…NPDQ), 417–454 (RDVD…NSAQ), 455–490 (QDSD…NPGQ), and 491–526 (EDND…EVTL). Residues 295–501 (NSGQEDVDRD…DNDRDGVGDA (207 aa)) are disordered. Basic and acidic residues-rich tracts occupy residues 332 to 344 (PDQR…KWGD) and 350 to 365 (RSQK…RDGQ). A Phosphoserine modification is found at serine 394. Basic and acidic residues-rich tracts occupy residues 412-424 (DNPD…HDFV) and 456-465 (DSDHDGKGDA). The tract at residues 525–755 (TLTDFRAFQT…DYERHRLRRA (231 aa)) is mediates cell survival and induction of the IAP family of survival proteins. Residues 530 to 744 (RAFQTVVLDP…LRYRCNDTIP (215 aa)) enclose the TSP C-terminal domain. Asparagine 740 is a glycosylation site (N-linked (GlcNAc...) asparagine).

The protein belongs to the thrombospondin family. As to quaternary structure, pentamer; disulfide-linked. Exists in a more compact conformation in the presence of calcium and shows a more extended conformation in the absence of calcium. Interacts with ITGB3, ITGA5 and FN1. Binding to FN1 requires the presence of divalent cations (Ca(2+), Mg(2+) or Mn(2+)). The greatest amount of binding is seen in the presence of Mn(2+). Interacts with MATN1, MATN3, MATN4 and ACAN. Binds heparin, heparan sulfate and chondroitin sulfate. EDTA dimishes significantly its binding to ACAN and abolishes its binding to MATN3, MATN4 and chondroitin sulfate. Interacts with collagen I, II and IX, and interaction with these collagens is dependent on the presence of zinc ions. Interacts with ADAMTS12. Interacts with ITGA7. Ca(2+) is required as a cofactor. In terms of processing, proteolytically cleaved by metalloproteases ADAMTS4 and ADAMTS1 with ADAMTS4 showing more potent activity.

Its subcellular location is the secreted. It is found in the extracellular space. The protein resides in the extracellular matrix. Its function is as follows. Plays a role in the structural integrity of cartilage via its interaction with other extracellular matrix proteins such as the collagens and fibronectin. Can mediate the interaction of chondrocytes with the cartilage extracellular matrix through interaction with cell surface integrin receptors. Could play a role in the pathogenesis of osteoarthritis. Potent suppressor of apoptosis in both primary chondrocytes and transformed cells. Suppresses apoptosis by blocking the activation of caspase-3 and by inducing the IAP family of survival proteins (BIRC3, BIRC2, BIRC5 and XIAP). Essential for maintaining a vascular smooth muscle cells (VSMCs) contractile/differentiated phenotype under physiological and pathological stimuli. Maintains this phenotype of VSMCs by interacting with ITGA7. This chain is Cartilage oligomeric matrix protein, found in Rattus norvegicus (Rat).